The following is a 154-amino-acid chain: Transcriptional repressor NrdR (154 aa).

The segment at 3-34 (CPFCRHPDSRVVDSREADEGQAIRRRRSCPEC) is a zinc-finger region. Residues 46–136 (LSVVKRSGVT…VYRSFSSAED (91 aa)) form the ATP-cone domain.

The protein belongs to the NrdR family. It depends on Zn(2+) as a cofactor.

Functionally, negatively regulates transcription of bacterial ribonucleotide reductase nrd genes and operons by binding to NrdR-boxes. This Rhodococcus jostii (strain RHA1) protein is Transcriptional repressor NrdR.